The primary structure comprises 374 residues: Peptide chain release factor 2 (374 aa).

Position 256 is an N5-methylglutamine (glutamine 256).

Belongs to the prokaryotic/mitochondrial release factor family. Post-translationally, methylated by PrmC. Methylation increases the termination efficiency of RF2.

The protein resides in the cytoplasm. In terms of biological role, peptide chain release factor 2 directs the termination of translation in response to the peptide chain termination codons UGA and UAA. This Mycobacterium leprae (strain Br4923) protein is Peptide chain release factor 2.